Reading from the N-terminus, the 547-residue chain is Chaperonin GroEL (547 aa).

ATP-binding positions include 30–33 (TLGP), Lys-51, 87–91 (DGTTT), Gly-415, and Asp-495.

The protein belongs to the chaperonin (HSP60) family. In terms of assembly, forms a cylinder of 14 subunits composed of two heptameric rings stacked back-to-back. Interacts with the co-chaperonin GroES.

It is found in the cytoplasm. It catalyses the reaction ATP + H2O + a folded polypeptide = ADP + phosphate + an unfolded polypeptide.. Functionally, together with its co-chaperonin GroES, plays an essential role in assisting protein folding. The GroEL-GroES system forms a nano-cage that allows encapsulation of the non-native substrate proteins and provides a physical environment optimized to promote and accelerate protein folding. This chain is Chaperonin GroEL, found in Thiobacillus denitrificans (strain ATCC 25259 / T1).